Consider the following 221-residue polypeptide: Serine/arginine-rich splicing factor 2 (221 aa).

The region spanning 14 to 92 (TSLKVDNLTY…RELRVQMARY (79 aa)) is the RRM domain. The segment at 91–221 (RYGRPPDSHH…SPEEEGAVSS (131 aa)) is disordered. Basic residues-rich tracts occupy residues 117–171 (RRSR…RSKS) and 179–189 (SRSRSRSRSRS).

It belongs to the splicing factor SR family. Post-translationally, extensively phosphorylated on serine residues in the RS domain.

It is found in the nucleus. In terms of biological role, necessary for the splicing of pre-mRNA. It is required for formation of the earliest ATP-dependent splicing complex and interacts with spliceosomal components bound to both the 5'- and 3'-splice sites during spliceosome assembly. It also is required for ATP-dependent interactions of both U1 and U2 snRNPs with pre-mRNA. The chain is Serine/arginine-rich splicing factor 2 (SRSF2) from Gallus gallus (Chicken).